The chain runs to 609 residues: MCGIFGYLGNQDGVSIVLEGLAKLEYRGYDSAGLAAVVEQELFIRKTVGRVQELSNLFQEREIPTASVIGHTRWATHGVPTEINAHPHVDEGRSCAVVHNGIIENFKELRRELTAQGISFASDTDSEIIVQLFSLYYQESQDLVFSFCQTLAQLRGSVACALIHKDHPHTILCASQESPLILGLGKEETFIASDSRAFFKYTRHSQALASGEFAIVSQGKEPEVYNLELKKIHKDVRQITCSEDASDKSGYGYYMLKEIYDQPEVLEGLIQKHMDEEGHILSEFLSDVPIKSFKEITIVACGSSYHAGYLAKYIIESLVSIPVHIEVASEFRYRRPYIGKDTLGILISQSGETADTLAALKELRRRNIAYLLGICNVPESAIALGVDHCLFLEAGVEIGVATTKAFTSQLLLLVFLGLKLANVHGALTHAEQCSFGQGLQSLPDLCQKLLANESLHSWAQPYSYEDKFLFLGRRLMYPVVMEAALKLKEIAYIEANAYPGGEMKHGPIALISKGTPVIAFCGDDIVYEKMIGNMMEVKARHAHVIAIAPESREDIAAVSDQQIFVPDCHFLAAPVLYTIVGQVMAYAMALAKGMEIDCPRNLAKSVTVE.

Residue Cys2 is the Nucleophile; for GATase activity of the active site. Residues 2–219 (CGIFGYLGNQ…SGEFAIVSQG (218 aa)) form the Glutamine amidotransferase type-2 domain. SIS domains are found at residues 285-426 (LSDV…VHGA) and 458-599 (WAQP…IDCP). Lys604 acts as the For Fru-6P isomerization activity in catalysis.

As to quaternary structure, homodimer.

The protein resides in the cytoplasm. The enzyme catalyses D-fructose 6-phosphate + L-glutamine = D-glucosamine 6-phosphate + L-glutamate. Catalyzes the first step in hexosamine metabolism, converting fructose-6P into glucosamine-6P using glutamine as a nitrogen source. In Chlamydia pneumoniae (Chlamydophila pneumoniae), this protein is Glutamine--fructose-6-phosphate aminotransferase [isomerizing].